Reading from the N-terminus, the 542-residue chain is ATP synthase subunit beta (542 aa).

Residues 1–50 show a composition bias toward low complexity; the sequence is MAKTPAKAPAAAAKPAAVKKPAAPKAAAAPKAAAVATPAAKKPAAPKAAP. Residues 1–61 form a disordered region; that stretch reads MAKTPAKAPA…SKVAGTREKP (61 aa). 216–223 provides a ligand contact to ATP; it reads GGAGVGKT.

Belongs to the ATPase alpha/beta chains family. As to quaternary structure, F-type ATPases have 2 components, CF(1) - the catalytic core - and CF(0) - the membrane proton channel. CF(1) has five subunits: alpha(3), beta(3), gamma(1), delta(1), epsilon(1). CF(0) has three main subunits: a(1), b(2) and c(9-12). The alpha and beta chains form an alternating ring which encloses part of the gamma chain. CF(1) is attached to CF(0) by a central stalk formed by the gamma and epsilon chains, while a peripheral stalk is formed by the delta and b chains.

It localises to the cell inner membrane. It carries out the reaction ATP + H2O + 4 H(+)(in) = ADP + phosphate + 5 H(+)(out). Functionally, produces ATP from ADP in the presence of a proton gradient across the membrane. The catalytic sites are hosted primarily by the beta subunits. The sequence is that of ATP synthase subunit beta from Caulobacter sp. (strain K31).